Here is a 150-residue protein sequence, read N- to C-terminus: Large ribosomal subunit protein uL13 (150 aa).

It belongs to the universal ribosomal protein uL13 family. As to quaternary structure, part of the 50S ribosomal subunit.

Functionally, this protein is one of the early assembly proteins of the 50S ribosomal subunit, although it is not seen to bind rRNA by itself. It is important during the early stages of 50S assembly. The polypeptide is Large ribosomal subunit protein uL13 (Sulfurihydrogenibium sp. (strain YO3AOP1)).